A 348-amino-acid chain; its full sequence is MRKNILDFSYEELVDEFSKIGLEKFRVDQVWDWIYKKHEFDFDKMTNLSKEHRNTLSERFYIYVPELLDMQISQIDKTTKFLWKLEDDNTIESVLLFHPDRVTACISTQVGCPAKCAFCATGQSGFVRNLSAGEIVSQIIAMEKHRKVNIGNIVYMGMGEPLLNYKEVVKSVKMLNHKKGKNISMRRISISTVGIPEKIVELAQDLPEVKLAISLHAPNNYKRDIIVPMNKKYSVEEIIQSAKEYQKITKNRVTFEYILIREFNDFVDDAEKLAELLKGMGAYVNLIPVNPVPSSGELKFERPHHWAIERFKEVLDKHNIENEIRREKGTDIDAACGQLRRRYITNKK.

Glutamate 92 (proton acceptor) is an active-site residue. The 234-residue stretch at 98 to 331 folds into the Radical SAM core domain; the sequence is HPDRVTACIS…NEIRREKGTD (234 aa). Residues cysteine 105 and cysteine 336 are joined by a disulfide bond. [4Fe-4S] cluster is bound by residues cysteine 112, cysteine 116, and cysteine 119. Residues 159 to 160, serine 191, 214 to 216, and asparagine 290 each bind S-adenosyl-L-methionine; these read GE and SLH. Cysteine 336 serves as the catalytic S-methylcysteine intermediate.

Belongs to the radical SAM superfamily. RlmN family. The cofactor is [4Fe-4S] cluster.

The protein resides in the cytoplasm. It catalyses the reaction adenosine(2503) in 23S rRNA + 2 reduced [2Fe-2S]-[ferredoxin] + 2 S-adenosyl-L-methionine = 2-methyladenosine(2503) in 23S rRNA + 5'-deoxyadenosine + L-methionine + 2 oxidized [2Fe-2S]-[ferredoxin] + S-adenosyl-L-homocysteine. The enzyme catalyses adenosine(37) in tRNA + 2 reduced [2Fe-2S]-[ferredoxin] + 2 S-adenosyl-L-methionine = 2-methyladenosine(37) in tRNA + 5'-deoxyadenosine + L-methionine + 2 oxidized [2Fe-2S]-[ferredoxin] + S-adenosyl-L-homocysteine. Its function is as follows. Specifically methylates position 2 of adenine 2503 in 23S rRNA and position 2 of adenine 37 in tRNAs. The sequence is that of Probable dual-specificity RNA methyltransferase RlmN from Fervidobacterium nodosum (strain ATCC 35602 / DSM 5306 / Rt17-B1).